Here is a 382-residue protein sequence, read N- to C-terminus: UDP-N-acetylglucosamine--N-acetylmuramyl-(pentapeptide) pyrophosphoryl-undecaprenol N-acetylglucosamine transferase (382 aa).

UDP-N-acetyl-alpha-D-glucosamine-binding positions include 17-19 (TAG), N137, R179, S213, and Q308.

The protein belongs to the glycosyltransferase 28 family. MurG subfamily.

It is found in the cell membrane. The enzyme catalyses di-trans,octa-cis-undecaprenyl diphospho-N-acetyl-alpha-D-muramoyl-L-alanyl-D-glutamyl-meso-2,6-diaminopimeloyl-D-alanyl-D-alanine + UDP-N-acetyl-alpha-D-glucosamine = di-trans,octa-cis-undecaprenyl diphospho-[N-acetyl-alpha-D-glucosaminyl-(1-&gt;4)]-N-acetyl-alpha-D-muramoyl-L-alanyl-D-glutamyl-meso-2,6-diaminopimeloyl-D-alanyl-D-alanine + UDP + H(+). It participates in cell wall biogenesis; peptidoglycan biosynthesis. Cell wall formation. Catalyzes the transfer of a GlcNAc subunit on undecaprenyl-pyrophosphoryl-MurNAc-pentapeptide (lipid intermediate I) to form undecaprenyl-pyrophosphoryl-MurNAc-(pentapeptide)GlcNAc (lipid intermediate II). The polypeptide is UDP-N-acetylglucosamine--N-acetylmuramyl-(pentapeptide) pyrophosphoryl-undecaprenol N-acetylglucosamine transferase (Rhodococcus jostii (strain RHA1)).